We begin with the raw amino-acid sequence, 396 residues long: Ribosomal RNA large subunit methyltransferase I (396 aa).

Residues 2–79 form the PUA domain; sequence AIRIKLKPGR…REEEIDREFF (78 aa).

This sequence belongs to the methyltransferase superfamily. RlmI family.

The protein resides in the cytoplasm. It carries out the reaction cytidine(1962) in 23S rRNA + S-adenosyl-L-methionine = 5-methylcytidine(1962) in 23S rRNA + S-adenosyl-L-homocysteine + H(+). Specifically methylates the cytosine at position 1962 (m5C1962) of 23S rRNA. The sequence is that of Ribosomal RNA large subunit methyltransferase I from Shewanella oneidensis (strain ATCC 700550 / JCM 31522 / CIP 106686 / LMG 19005 / NCIMB 14063 / MR-1).